Here is a 255-residue protein sequence, read N- to C-terminus: Ribonuclease HII (255 aa).

In terms of domain architecture, RNase H type-2 spans N72–E255. Residues D78, E79, and D170 each contribute to the a divalent metal cation site.

This sequence belongs to the RNase HII family. Requires Mn(2+) as cofactor. It depends on Mg(2+) as a cofactor.

The protein localises to the cytoplasm. The catalysed reaction is Endonucleolytic cleavage to 5'-phosphomonoester.. In terms of biological role, endonuclease that specifically degrades the RNA of RNA-DNA hybrids. In Ruminiclostridium cellulolyticum (strain ATCC 35319 / DSM 5812 / JCM 6584 / H10) (Clostridium cellulolyticum), this protein is Ribonuclease HII.